The sequence spans 247 residues: DNA polymerase sliding clamp (247 aa).

This sequence belongs to the PCNA family. As to quaternary structure, homotrimer. The subunits circularize to form a toroid; DNA passes through its center. Replication factor C (RFC) is required to load the toroid on the DNA.

In terms of biological role, sliding clamp subunit that acts as a moving platform for DNA processing. Responsible for tethering the catalytic subunit of DNA polymerase and other proteins to DNA during high-speed replication. This Methanoregula boonei (strain DSM 21154 / JCM 14090 / 6A8) protein is DNA polymerase sliding clamp.